A 299-amino-acid polypeptide reads, in one-letter code: Aspartate carbamoyltransferase catalytic subunit (299 aa).

Residues Arg-54 and Thr-55 each contribute to the carbamoyl phosphate site. Lys-83 lines the L-aspartate pocket. The carbamoyl phosphate site is built by Arg-104, His-132, and Gln-135. 2 residues coordinate L-aspartate: Arg-165 and Arg-222. The carbamoyl phosphate site is built by Leu-261 and Pro-262.

Belongs to the aspartate/ornithine carbamoyltransferase superfamily. ATCase family. Heterooligomer of catalytic and regulatory chains.

The enzyme catalyses carbamoyl phosphate + L-aspartate = N-carbamoyl-L-aspartate + phosphate + H(+). Its pathway is pyrimidine metabolism; UMP biosynthesis via de novo pathway; (S)-dihydroorotate from bicarbonate: step 2/3. Functionally, catalyzes the condensation of carbamoyl phosphate and aspartate to form carbamoyl aspartate and inorganic phosphate, the committed step in the de novo pyrimidine nucleotide biosynthesis pathway. This chain is Aspartate carbamoyltransferase catalytic subunit, found in Archaeoglobus fulgidus (strain ATCC 49558 / DSM 4304 / JCM 9628 / NBRC 100126 / VC-16).